We begin with the raw amino-acid sequence, 496 residues long: Rhamnulokinase (496 aa).

13–17 (ASSGR) is an ATP binding site. Substrate contacts are provided by residues glycine 83 and 236–238 (HDT). Aspartate 237 serves as the catalytic Proton acceptor. Threonine 259 contacts ATP. Residue asparagine 296 participates in substrate binding. Position 304 (glutamine 304) interacts with ATP. An intrachain disulfide couples cysteine 353 to cysteine 370. Glycine 402 serves as a coordination point for ATP. Cysteine 413 and cysteine 417 are joined by a disulfide.

The protein belongs to the rhamnulokinase family. Requires Mg(2+) as cofactor.

The enzyme catalyses L-rhamnulose + ATP = L-rhamnulose 1-phosphate + ADP + H(+). Its pathway is carbohydrate degradation; L-rhamnose degradation; glycerone phosphate from L-rhamnose: step 2/3. Its function is as follows. Involved in the catabolism of L-rhamnose (6-deoxy-L-mannose). Catalyzes the transfer of the gamma-phosphate group from ATP to the 1-hydroxyl group of L-rhamnulose to yield L-rhamnulose 1-phosphate. This is Rhamnulokinase from Pectobacterium carotovorum subsp. carotovorum (strain PC1).